The sequence spans 356 residues: Histidinol-phosphate aminotransferase 1 (356 aa).

Lys210 is modified (N6-(pyridoxal phosphate)lysine).

Belongs to the class-II pyridoxal-phosphate-dependent aminotransferase family. Histidinol-phosphate aminotransferase subfamily. As to quaternary structure, homodimer. Requires pyridoxal 5'-phosphate as cofactor.

The enzyme catalyses L-histidinol phosphate + 2-oxoglutarate = 3-(imidazol-4-yl)-2-oxopropyl phosphate + L-glutamate. The protein operates within amino-acid biosynthesis; L-histidine biosynthesis; L-histidine from 5-phospho-alpha-D-ribose 1-diphosphate: step 7/9. The sequence is that of Histidinol-phosphate aminotransferase 1 from Hydrogenovibrio crunogenus (strain DSM 25203 / XCL-2) (Thiomicrospira crunogena).